A 302-amino-acid polypeptide reads, in one-letter code: Dihydroorotate dehydrogenase B (NAD(+)), catalytic subunit (302 aa).

Residues S23 and 47–48 (KG) each bind FMN. Substrate is bound by residues K47 and 71–75 (NSVGL). The FMN site is built by N101 and N128. N128 provides a ligand contact to substrate. The active-site Nucleophile is C131. Residues K166 and I192 each coordinate FMN. Position 193–194 (193–194 (NT)) interacts with substrate. FMN-binding positions include G218, 244–245 (GG), and 266–267 (GT).

Belongs to the dihydroorotate dehydrogenase family. Type 1 subfamily. In terms of assembly, heterotetramer of 2 PyrK and 2 PyrD type B subunits. Requires FMN as cofactor.

The protein resides in the cytoplasm. It catalyses the reaction (S)-dihydroorotate + NAD(+) = orotate + NADH + H(+). It functions in the pathway pyrimidine metabolism; UMP biosynthesis via de novo pathway; orotate from (S)-dihydroorotate (NAD(+) route): step 1/1. In terms of biological role, catalyzes the conversion of dihydroorotate to orotate with NAD(+) as electron acceptor. The protein is Dihydroorotate dehydrogenase B (NAD(+)), catalytic subunit (pyrD) of Alkaliphilus oremlandii (strain OhILAs) (Clostridium oremlandii (strain OhILAs)).